Consider the following 237-residue polypeptide: Segregation and condensation protein A (237 aa).

The protein belongs to the ScpA family. As to quaternary structure, component of a cohesin-like complex composed of ScpA, ScpB and the Smc homodimer, in which ScpA and ScpB bind to the head domain of Smc. The presence of the three proteins is required for the association of the complex with DNA.

The protein localises to the cytoplasm. In terms of biological role, participates in chromosomal partition during cell division. May act via the formation of a condensin-like complex containing Smc and ScpB that pull DNA away from mid-cell into both cell halves. The polypeptide is Segregation and condensation protein A (Streptococcus thermophilus (strain ATCC BAA-250 / LMG 18311)).